Here is a 222-residue protein sequence, read N- to C-terminus: Transcriptional regulatory protein BasR (222 aa).

The Response regulatory domain occupies 2–116 (KILIVEDDTL…ELHARIRALL (115 aa)). Asp51 bears the 4-aspartylphosphate mark. The ompR/PhoB-type DNA-binding region spans 124 to 218 (ESELIVGNLT…VRGFGYMLVA (95 aa)).

In terms of assembly, homodimer. Phosphorylated by BasS.

The protein resides in the cytoplasm. Its function is as follows. Member of the two-component regulatory system BasS/BasR. BasR induces the transcription of the ugd, ais, arnBCADTEF and eptA-basRS loci, all involved in resistance to polymyxin. The sequence is that of Transcriptional regulatory protein BasR (basR) from Escherichia coli (strain K12).